Consider the following 1669-residue polypeptide: Formin-like protein 12 (1669 aa).

Residues 5–193 enclose the Phosphatase tensin-type domain; it reads RRLFYRKPPD…QYICKMDDEL (189 aa). Cys126 (phosphocysteine intermediate) is an active-site residue. One can recognise a C2 tensin-type domain in the interval 199-338; the sequence is PIPFTLDCVI…FKAEVLFSEF (140 aa). Disordered regions lie at residues 688 to 709, 1025 to 1240, and 1631 to 1669; these read QGSS…DANE, DAGP…GHGL, and IEAD…SPFK. Residues 1036-1050 show a composition bias toward basic and acidic residues; it reads LEWKRCPHHPPERPH. 4 stretches are compositionally biased toward pro residues: residues 1060–1069, 1098–1127, 1136–1190, and 1198–1230; these read PSPPSPPPPQ, APPP…PPPI, PPAP…PPPR, and PPTP…PAPP. An FH2 domain is found at 1247-1646; the sequence is NSAATARRST…KAQKEAEKEA (400 aa).

The protein belongs to the formin-like family. Class-II subfamily.

The polypeptide is Formin-like protein 12 (FH12) (Oryza sativa subsp. japonica (Rice)).